The following is a 287-amino-acid chain: Nucleotide-binding protein VIBHAR_03667 (287 aa).

8–15 (GHSGAGKS) is an ATP binding site. Residue 56–59 (DIRN) coordinates GTP.

This sequence belongs to the RapZ-like family.

Displays ATPase and GTPase activities. This Vibrio campbellii (strain ATCC BAA-1116) protein is Nucleotide-binding protein VIBHAR_03667.